Reading from the N-terminus, the 356-residue chain is Inositol monophosphatase 3 (356 aa).

Residues 11–31 (LGIGVFCLLGLGVLYHVYSGF) form a helical membrane-spanning segment. Positions 127, 167, 169, 170, and 293 each coordinate Mg(2+). A substrate-binding site is contributed by Glu-127. Substrate contacts are provided by residues 169–172 (LDAT) and Asp-293.

This sequence belongs to the inositol monophosphatase superfamily. Mg(2+) serves as cofactor.

The protein localises to the membrane. The catalysed reaction is a myo-inositol phosphate + H2O = myo-inositol + phosphate. Its pathway is polyol metabolism; myo-inositol biosynthesis; myo-inositol from D-glucose 6-phosphate: step 2/2. The sequence is that of Inositol monophosphatase 3 (bpnt2) from Xenopus tropicalis (Western clawed frog).